Here is a 121-residue protein sequence, read N- to C-terminus: Prefoldin subunit beta (121 aa).

This sequence belongs to the prefoldin subunit beta family. As to quaternary structure, heterohexamer of two alpha and four beta subunits.

Its subcellular location is the cytoplasm. Its function is as follows. Molecular chaperone capable of stabilizing a range of proteins. Seems to fulfill an ATP-independent, HSP70-like function in archaeal de novo protein folding. The polypeptide is Prefoldin subunit beta (pfdB) (Methanothermobacter thermautotrophicus (strain ATCC 29096 / DSM 1053 / JCM 10044 / NBRC 100330 / Delta H) (Methanobacterium thermoautotrophicum)).